Reading from the N-terminus, the 634-residue chain is Chaperone protein DnaK 2 (634 aa).

Residue Thr-197 is modified to Phosphothreonine; by autocatalysis. Over residues 600–620 (ASAEASANAQAGPSSSSSSSS) the composition is skewed to low complexity. The interval 600–634 (ASAEASANAQAGPSSSSSSSSGDDDVIDAEFSESK) is disordered. A compositionally biased stretch (acidic residues) spans 621 to 634 (GDDDVIDAEFSESK).

It belongs to the heat shock protein 70 family.

Its function is as follows. Acts as a chaperone. In Synechococcus sp. (strain ATCC 27144 / PCC 6301 / SAUG 1402/1) (Anacystis nidulans), this protein is Chaperone protein DnaK 2.